We begin with the raw amino-acid sequence, 23 residues long: Dahlein-4.3 (23 aa).

In terms of tissue distribution, expressed by the skin dorsal glands.

It is found in the secreted. Its function is as follows. Has no antimicrobial activity. This is Dahlein-4.3 from Ranoidea dahlii (Dahl's aquatic frog).